A 463-amino-acid polypeptide reads, in one-letter code: O-phospho-L-seryl-tRNA:Cys-tRNA synthase 2 (463 aa).

Pyridoxal 5'-phosphate contacts are provided by residues 154-155, N259, and 282-284; these read AR and SGH. K285 is subject to N6-(pyridoxal phosphate)lysine.

It belongs to the SepCysS family. Homodimer. Interacts with SepRS. Pyridoxal 5'-phosphate serves as cofactor.

It catalyses the reaction O-phospho-L-seryl-tRNA(Cys) + hydrogen sulfide + H(+) = L-cysteinyl-tRNA(Cys) + phosphate. Its function is as follows. Converts O-phospho-L-seryl-tRNA(Cys) (Sep-tRNA(Cys)) to L-cysteinyl-tRNA(Cys) (Cys-tRNA(Cys)). The protein is O-phospho-L-seryl-tRNA:Cys-tRNA synthase 2 of Methanocella arvoryzae (strain DSM 22066 / NBRC 105507 / MRE50).